The following is a 192-amino-acid chain: Peroxiredoxin tpx1 (192 aa).

Residues 3 to 161 enclose the Thioredoxin domain; sequence LQIGKPAPDF…ALRLLDAFQF (159 aa). Cysteine 48 acts as the Cysteine sulfenic acid (-SOH) intermediate in catalysis. Residues serine 105 and serine 148 each carry the phosphoserine modification.

This sequence belongs to the peroxiredoxin family. AhpC/Prx1 subfamily. As to quaternary structure, homodimer; disulfide-linked, upon oxidation. Interacts with srx1 in response to oxidative stress. Interacts with pap1 via transient disulfide linkages. In terms of processing, the enzyme can be inactivated by further oxidation of the cysteine sulfenic acid (C(P)-SOH) to sulphinic acid (C(P)-SO2H) instead of its condensation to a disulfide bond. It can be reactivated by forming a transient disulfide bond with sulfiredoxin srx1, which reduces the cysteine sulfinic acid in an ATP- and Mg-dependent manner.

It localises to the cytoplasm. The protein resides in the nucleus. The enzyme catalyses a hydroperoxide + [thioredoxin]-dithiol = an alcohol + [thioredoxin]-disulfide + H2O. In terms of biological role, thiol-specific peroxidase that catalyzes the reduction of hydrogen peroxide and organic hydroperoxides to water and alcohols, respectively. Plays a role in cell protection against oxidative stress by detoxifying peroxides and as sensor of hydrogen peroxide-mediated signaling events. Relays hydrogen peroxide as a signal to the transcription factor pap1 by inducing the formation of intramolecular disulfide bonds in pap1, which causes its nuclear accumulation and activation. Reduced by srx1 and this regulation acts as a molecular switch controlling the transcriptional response to hydrogen peroxide. The protein is Peroxiredoxin tpx1 (tpx1) of Schizosaccharomyces pombe (strain 972 / ATCC 24843) (Fission yeast).